An 863-amino-acid polypeptide reads, in one-letter code: Receptor-like protein 9DC3 (863 aa).

The signal sequence occupies residues 1 to 21 (MGCVKLVFFMLYVFLFQLVSS). The Extracellular segment spans residues 22 to 812 (SSLPHLCPED…EEDSPMISWQ (791 aa)). The segment at 24 to 90 (LPHLCPEDQA…GVHCDETTGQ (67 aa)) is N-cap. N-linked (GlcNAc...) asparagine glycans are attached at residues Asn71 and Asn108. The LRR 1; degenerate repeat unit spans residues 91 to 114 (VIALDLRCSQLQGKFHSNSSLFQL). 2 LRR repeats span residues 115-138 (SNLK…KFGE) and 140-163 (SDLT…ISHL). An LRR 4; degenerate repeat occupies 164–190 (SKLHVLLIGDQYGLSIVPHNFEPLLKN). 3 N-linked (GlcNAc...) asparagine glycosylation sites follow: Asn190, Asn203, and Asn211. LRR repeat units follow at residues 191 to 213 (LTQL…SNFS), 214 to 237 (SHLT…VFHL), 240 to 262 (LEFL…KWNS), 264 to 286 (ASLM…SFSH), 287 to 311 (LTSL…LWNL), and 312 to 336 (TNIE…IFEK). The N-linked (GlcNAc...) asparagine glycan is linked to Asn261. Residues Asn299 and Asn310 are each glycosylated (N-linked (GlcNAc...) asparagine). An LRR 11; degenerate repeat occupies 337–357 (LKKLSLFRNDNLDGGLEFLSF). LRR repeat units follow at residues 358-382 (NTQL…ISGL), 383-406 (QNLE…IFSL), 408-428 (SLVE…EFKS), 429-452 (KTLS…LLNQ), 454-476 (NLQL…ICNL), 477-500 (KTLI…VVER), 502-524 (EYLS…TFSV), 525-549 (GNIL…LINC), 551-572 (YLAL…WLGH), 573-597 (LSQL…GNTN), 599-623 (FTRL…ILGN), 667-690 (LDSN…IIGD), 691-714 (LVGL…SFQN), 715-739 (LSVL…LASL), and 741-759 (FLEV…IPKG). N-linked (GlcNAc...) asparagine glycosylation is found at Asn378, Asn396, and Asn416. The N-linked (GlcNAc...) asparagine glycan is linked to Asn464. Asn519 is a glycosylation site (N-linked (GlcNAc...) asparagine). The N-linked (GlcNAc...) asparagine glycan is linked to Asn563. 3 N-linked (GlcNAc...) asparagine glycosylation sites follow: Asn674, Asn698, and Asn714. N-linked (GlcNAc...) asparagine glycosylation is found at Asn746 and Asn767. The interval 760–812 (KQFDSFGNTSYQGNDGLCGFPLSKLCGGDDQVTTPAELDQEEEEEDSPMISWQ) is C-cap/acidic domain. Residues 813-833 (GVLVGYGCGLVIGLSVIYIMW) traverse the membrane as a helical segment. Over 834–863 (STQYPAWFSRMHLKLEQIVTTRMKKHKKRY) the chain is Cytoplasmic.

This sequence belongs to the RLP family.

Its subcellular location is the cell membrane. Its function is as follows. Involved in plant defense. Confers resistance to the fungal pathogen C.fulvum through recognition of the AVR9 elicitor protein. This is Receptor-like protein 9DC3 from Solanum pimpinellifolium (Currant tomato).